Here is a 248-residue protein sequence, read N- to C-terminus: Triosephosphate isomerase (248 aa).

The substrate site is built by Asn-11 and Lys-13. His-95 serves as the catalytic Electrophile. Catalysis depends on Glu-165, which acts as the Proton acceptor.

Belongs to the triosephosphate isomerase family. In terms of assembly, homodimer.

The protein resides in the cytoplasm. It catalyses the reaction dihydroxyacetone phosphate = methylglyoxal + phosphate. The enzyme catalyses D-glyceraldehyde 3-phosphate = dihydroxyacetone phosphate. It functions in the pathway carbohydrate degradation; glycolysis; D-glyceraldehyde 3-phosphate from glycerone phosphate: step 1/1. Its pathway is carbohydrate biosynthesis; gluconeogenesis. Functionally, triosephosphate isomerase is an extremely efficient metabolic enzyme that catalyzes the interconversion between dihydroxyacetone phosphate (DHAP) and D-glyceraldehyde-3-phosphate (G3P) in glycolysis and gluconeogenesis. It is also responsible for the non-negligible production of methylglyoxal a reactive cytotoxic side-product that modifies and can alter proteins, DNA and lipids. The polypeptide is Triosephosphate isomerase (tpi1) (Xenopus laevis (African clawed frog)).